Consider the following 858-residue polypeptide: Elongation factor 2 (858 aa).

The tr-type G domain occupies 17 to 362; sequence ANIRNMSVIA…MITIHLPSPV (346 aa). 26 to 33 contacts GTP; the sequence is AHVDHGKS. Position 54 is a phosphothreonine (threonine 54). A Phosphothreonine; by EEF2K modification is found at threonine 57. Threonine 59 carries the post-translational modification Phosphothreonine. Lysine 152 is subject to N6-succinyllysine. GTP contacts are provided by residues 158–161 and 216–218; these read NKMD and SGL. The residue at position 235 (lysine 235) is an N6-acetyllysine. Lysine 239 bears the N6-acetyllysine; alternate mark. Residue lysine 239 forms a Glycyl lysine isopeptide (Lys-Gly) (interchain with G-Cter in SUMO1); alternate linkage. At tyrosine 265 the chain carries Phosphotyrosine; by CSK. An N6-acetyllysine; alternate modification is found at lysine 272. Position 272 is an N6-succinyllysine; alternate (lysine 272). Lysine 275 carries the post-translational modification N6-acetyllysine. Residue lysine 322 forms a Glycyl lysine isopeptide (Lys-Gly) (interchain with G-Cter in SUMO) linkage. A Phosphoserine modification is found at serine 325. Tyrosine 373 carries the phosphotyrosine; by CSK modification. Threonine 435 carries the post-translational modification Phosphothreonine. Lysine 439 and lysine 445 each carry N6-acetyllysine. A Phosphoserine modification is found at serine 502. Position 525 is an N6,N6,N6-trimethyllysine; by EEF2KMT (lysine 525). A Glycyl lysine isopeptide (Lys-Gly) (interchain with G-Cter in SUMO) cross-link involves residue lysine 529. Lysine 572 carries the N6-succinyllysine modification. Serine 595 carries the post-translational modification Phosphoserine; by CDK2. N6-acetyllysine is present on lysine 619. Histidine 715 carries the post-translational modification Diphthamide.

Belongs to the TRAFAC class translation factor GTPase superfamily. Classic translation factor GTPase family. EF-G/EF-2 subfamily. As to quaternary structure, binds to 80S ribosomes. Actively translating ribosomes show mutually exclusive binding of eIF5a (EIF5A or EIF5A2) and EEF2/eEF2. Interacts with SERBP1; interaction sequesters EEF2/eEF2 at the A-site of the ribosome, thereby blocking the interaction sites of the mRNA-tRNA complex, promoting ribosome stabilization and hibernation. Interacts with HABP4; interaction takes place at the A-site of hibernating ribosomes and promotes ribosome stabilization. Component of the mRNA surveillance SURF complex, at least composed of ERF1, ERF3 (ERF3A or ERF3B), EEF2, UPF1/RENT1, SMG1, SMG8 and SMG9. Interacts with RBPMS2. Post-translationally, phosphorylation by EF-2 kinase completely inactivates EF-2; it requires prior phosphorylation by CDK2 at Ser-595 during mitotic prometaphase. Phosphorylation by CSK promotes SUMOylation, proteolytic cleavage, and nuclear translocation if the C-terminal fragment. Diphthamide is 2-[3-carboxyamido-3-(trimethyl-ammonio)propyl]histidine. In terms of processing, ISGylated. Post-translationally, proteolytically processed at two sites following phosphorylation by CSK. SUMOylated following phosphorylation by CSK, promotes proteolytic cleavage.

The protein localises to the cytoplasm. Its subcellular location is the nucleus. The enzyme catalyses GTP + H2O = GDP + phosphate + H(+). In terms of biological role, catalyzes the GTP-dependent ribosomal translocation step during translation elongation. During this step, the ribosome changes from the pre-translocational (PRE) to the post-translocational (POST) state as the newly formed A-site-bound peptidyl-tRNA and P-site-bound deacylated tRNA move to the P and E sites, respectively. Catalyzes the coordinated movement of the two tRNA molecules, the mRNA and conformational changes in the ribosome. The polypeptide is Elongation factor 2 (Eef2) (Mus musculus (Mouse)).